The sequence spans 272 residues: Probable nitrilase C965.09 (272 aa).

The CN hydrolase domain maps to 3-244 (ANIACVQMAP…EGVISYTVDL (242 aa)). Residue Glu-45 is the Proton acceptor of the active site. The active-site Proton donor is the Lys-118. Cys-150 acts as the Nucleophile in catalysis.

It belongs to the carbon-nitrogen hydrolase superfamily.

It localises to the cytoplasm. Its subcellular location is the nucleus. The sequence is that of Probable nitrilase C965.09 from Schizosaccharomyces pombe (strain 972 / ATCC 24843) (Fission yeast).